Here is a 455-residue protein sequence, read N- to C-terminus: Phosphoglycerate kinase, glycosomal (455 aa).

(2R)-3-phosphoglycerate contacts are provided by V23, D24, F25, N26, R39, S61, H62, G64, R65, R132, H168, and R169. The ADP site is built by G214 and A215. Position 214 (G214) interacts with CDP. Residues A215 and K216 each coordinate AMP. An ATP-binding site is contributed by A215. A Mg(2+)-binding site is contributed by A215. K216 provides a ligand contact to (2R)-3-phosphoglycerate. D219 contacts CDP. Position 219 (D219) interacts with Mg(2+). Residues K220 and G238 each contribute to the ADP site. An AMP-binding site is contributed by K220. K220 provides a ligand contact to ATP. G238 lines the CDP pocket. AMP is bound by residues A239 and A311. ATP contacts are provided by A239 and A311. Positions 311 and 335 each coordinate ADP. CDP is bound by residues G336 and F341. Positions 341, 342, 374, and 375 each coordinate ADP. Residue E342 coordinates AMP. The ATP site is built by E342, D374, and T375. D374 contacts Mg(2+). A topogenic signal region spans residues 417–455 (DAKAPAAAAAAGGDCPCGSGCAAVPAAATATVSMVLASP).

This sequence belongs to the phosphoglycerate kinase family. In terms of assembly, monomer. The cofactor is Mg(2+).

Its subcellular location is the glycosome. The catalysed reaction is (2R)-3-phosphoglycerate + ATP = (2R)-3-phospho-glyceroyl phosphate + ADP. Its pathway is carbohydrate degradation; glycolysis; pyruvate from D-glyceraldehyde 3-phosphate: step 2/5. The polypeptide is Phosphoglycerate kinase, glycosomal (PGKC) (Crithidia fasciculata).